The primary structure comprises 132 residues: ER membrane protein complex subunit 5 (132 aa).

At 1 to 3 the chain is on the cytoplasmic side; the sequence is MAS. The chain crosses the membrane as a helical span at residues 4–22; it reads SIWKGLVGIGLFALAHAAF. Residues 23-43 lie on the Lumenal side of the membrane; it reads SAAQHRSYMRLTEKEDETLPI. Residues 44–63 form a helical membrane-spanning segment; it reads DIVLQTLLAFIVACYGIVHI. Residues 64-132 are Cytoplasmic-facing; that stretch reads AGEFKDMDAT…KLSKLESMHR (69 aa).

This sequence belongs to the membrane magnesium transporter (TC 1.A.67) family. Component of the ER membrane protein complex (EMC).

It is found in the endoplasmic reticulum membrane. The protein resides in the golgi apparatus membrane. The protein localises to the early endosome membrane. Part of the endoplasmic reticulum membrane protein complex (EMC) that enables the energy-independent insertion into endoplasmic reticulum membranes of newly synthesized membrane proteins. Preferentially accommodates proteins with transmembrane domains that are weakly hydrophobic or contain destabilizing features such as charged and aromatic residues. Involved in the cotranslational insertion of multi-pass membrane proteins in which stop-transfer membrane-anchor sequences become ER membrane spanning helices. It is also required for the post-translational insertion of tail-anchored/TA proteins in endoplasmic reticulum membranes. By mediating the proper cotranslational insertion of N-terminal transmembrane domains in an N-exo topology, with translocated N-terminus in the lumen of the ER, controls the topology of multi-pass membrane proteins like the G protein-coupled receptors. By regulating the insertion of various proteins in membranes, it is indirectly involved in many cellular processes. May be involved in Mg(2+) transport. This chain is ER membrane protein complex subunit 5, found in Xenopus tropicalis (Western clawed frog).